Here is a 212-residue protein sequence, read N- to C-terminus: MQLFHLCLIISCSCPTVQASKLCLGWLWGMDIDPYKEFGATVELLSFLPSDFFPSVRDLLDTASALYREALESPEHCSPHHTALRQAILCWGELMTLATWVGVNLEDPASRDLVVSYVNTNMGLKFRQLLWFHISCLTFGRETVIEYLVSFGVWIRTPPAYRPPNAPILSTLPETTVVRRRGRSPRRRTPSPRRRRSQSPRRRRSQSRESQC.

The N-terminal stretch at 1-19 (MQLFHLCLIISCSCPTVQA) is a signal peptide. An HBEAG region spans residues 25-27 (GWL). Positions 165–212 (NAPILSTLPETTVVRRRGRSPRRRTPSPRRRRSQSPRRRRSQSRESQC) are disordered. The span at 178–205 (VRRRGRSPRRRTPSPRRRRSQSPRRRRS) shows a compositional bias: basic residues. The 1; half-length repeat unit spans residues 184 to 190 (SPRRRTP). A 3 X 8 AA repeats of S-P-R-R-R-R-S-Q region spans residues 184-206 (SPRRRTPSPRRRRSQSPRRRRSQ). Residues 184-212 (SPRRRTPSPRRRRSQSPRRRRSQSRESQC) constitute a propeptide that is removed on maturation. 2 repeat units span residues 191-198 (SPRRRRSQ) and 199-206 (SPRRRRSQ).

Belongs to the orthohepadnavirus precore antigen family. As to quaternary structure, homodimerizes. In terms of processing, phosphorylated. Cleaved by host furin.

It localises to the secreted. Its subcellular location is the host nucleus. Functionally, may regulate immune response to the intracellular capsid in acting as a T-cell tolerogen, by having an immunoregulatory effect which prevents destruction of infected cells by cytotoxic T-cells. This immune regulation may predispose to chronicity during perinatal infections and prevent severe liver injury during adult infections. In Homo sapiens (Human), this protein is External core antigen.